A 513-amino-acid chain; its full sequence is MQLNSTEISELIKKRIAQFNVVSEAQSTGTIVSVSDGVIRIHGLADVMQGEMIALPGNRYAIALNLERDSVGAVVMGPYADLAEGMEVKCTGRILEVPVGRGLLGRVVNTLGQPIDGKGEIDNDGFSPIEVIAPGVIDRQSVDQPVQTGYKAVDSMVPIGRGQRELIIGDRQTGKTALAIDAIINQRDSGIKCIYVAIGQKASTISNVVRKLEEHGALQNTIVVVASASESAALQYLAPYAGCAMGEYFRDRGEDALIVYDDLSKQAVAYRQISLLLRRPPGREAYPGDVFYLHSRLLERAARVNADYVERFTNGAVKGQTGSLTALPIIETQAGDVSAFVPTNVISITDGQIFLETSFFNAGIRPAVNPGISVSRVGGSAQTKLVKKLAGGIRTALAQYRELAAFAQFASDLDDATRKQLSHGQKVTELLKQKQFEPMSVAQLGLSLAAAEFGYLDDVEVERVGSFESNLLAYANANYAEFMKDLSKSGDFNDTIKAKLIEILDSFKKNSAW.

G169 to T176 is a binding site for ATP.

The protein belongs to the ATPase alpha/beta chains family. F-type ATPases have 2 components, CF(1) - the catalytic core - and CF(0) - the membrane proton channel. CF(1) has five subunits: alpha(3), beta(3), gamma(1), delta(1), epsilon(1). CF(0) has three main subunits: a(1), b(2) and c(9-12). The alpha and beta chains form an alternating ring which encloses part of the gamma chain. CF(1) is attached to CF(0) by a central stalk formed by the gamma and epsilon chains, while a peripheral stalk is formed by the delta and b chains.

The protein localises to the cell inner membrane. It carries out the reaction ATP + H2O + 4 H(+)(in) = ADP + phosphate + 5 H(+)(out). Its function is as follows. Produces ATP from ADP in the presence of a proton gradient across the membrane. The alpha chain is a regulatory subunit. The sequence is that of ATP synthase subunit alpha from Glaesserella parasuis serovar 5 (strain SH0165) (Haemophilus parasuis).